We begin with the raw amino-acid sequence, 122 residues long: Large ribosomal subunit protein uL14c (122 aa).

Belongs to the universal ribosomal protein uL14 family. As to quaternary structure, part of the 50S ribosomal subunit.

Its subcellular location is the plastid. It localises to the chloroplast. Its function is as follows. Binds to 23S rRNA. The sequence is that of Large ribosomal subunit protein uL14c from Amborella trichopoda.